The following is a 225-amino-acid chain: Pathogenesis-related thaumatin-like protein 3.8 (225 aa).

The signal sequence occupies residues 1 to 26 (MAKVSDLALLLVAGMAISLYIQETGA). 8 disulfide bridges follow: C35–C224, C76–C86, C91–C97, C139–C213, C144–C197, C152–C162, C166–C175, and C176–C184. N188 carries an N-linked (GlcNAc...) asparagine glycan.

Belongs to the thaumatin family.

In terms of biological role, may be involved in disease resistance. This Cryptomeria japonica (Japanese cedar) protein is Pathogenesis-related thaumatin-like protein 3.8.